Reading from the N-terminus, the 410-residue chain is Calsequestrin-2 (410 aa).

The N-terminal stretch at 1-19 (MKRTHLFIAGLYLLASCRA) is a signal peptide. Positions 221 to 242 (MDEPIAIPDKPYTEEELVEFVK) are calcium regulated hydrophobic site. Position 282 is a phosphotyrosine (tyrosine 282). N-linked (GlcNAc...) asparagine glycans are attached at residues asparagine 335 and asparagine 395. A disordered region spans residues 364–410 (DVLSGKINTEDDDNEEGDDGDDDEDDDDDDGNNSDEESNDDSDDDDE). Acidic residues predominate over residues 373-410 (EDDDNEEGDDGDDDEDDDDDDGNNSDEESNDDSDDDDE). 3 positions are modified to phosphoserine; by CK2: serine 397, serine 401, and serine 405.

The protein belongs to the calsequestrin family. As to quaternary structure, interacts with ASPH. Monomer, homodimer and homooligomer. Mostly monomeric in the absence of calcium. Forms higher oligomers in a calcium-dependent manner. Dimers associate to form tetramers, that then form linear homomer chains. Interacts with TRDN. In terms of processing, phosphorylation in the C-terminus, probably by CK2, moderately increases calcium buffering capacity. N-glycosylated. Detected in heart muscle (at protein level).

Its subcellular location is the sarcoplasmic reticulum lumen. Functionally, calsequestrin is a high-capacity, moderate affinity, calcium-binding protein and thus acts as an internal calcium store in muscle. Calcium ions are bound by clusters of acidic residues at the protein surface, especially at the interface between subunits. Can bind around 60 Ca(2+) ions. Regulates the release of lumenal Ca(2+) via the calcium release channel RYR2; this plays an important role in triggering muscle contraction. Plays a role in excitation-contraction coupling in the heart and in regulating the rate of heart beats. This is Calsequestrin-2 (CASQ2) from Canis lupus familiaris (Dog).